We begin with the raw amino-acid sequence, 192 residues long: I-Kappa-B like protein H1 (192 aa).

3 ANK repeats span residues 94-126 (KGAQ…DING), 131-161 (AGLT…DVKV), and 165-192 (GKET…SKKM).

Belongs to the polydnaviridae I-Kappa-B-like protein family.

Suppresses the host immune response through NF-kappa-B inactivation. Possesses ankyrin repeat domains required for NF-kappa-B binding but lacks the regulatory regions required for dissociation from NF-kappa-B and degradation. Therefore, prevents host NF-kappa-B release and subsequent activation. The polypeptide is I-Kappa-B like protein H1 (H4) (Microplitis demolitor bracovirus (isolate Webb) (MdBV)).